Here is a 126-residue protein sequence, read N- to C-terminus: Aspartate 1-decarboxylase (126 aa).

Serine 25 serves as the catalytic Schiff-base intermediate with substrate; via pyruvic acid. Serine 25 carries the pyruvic acid (Ser) modification. Threonine 57 is a substrate binding site. Tyrosine 58 (proton donor) is an active-site residue. Residue 73–75 participates in substrate binding; the sequence is GAA.

This sequence belongs to the PanD family. As to quaternary structure, heterooctamer of four alpha and four beta subunits. Pyruvate serves as cofactor. In terms of processing, is synthesized initially as an inactive proenzyme, which is activated by self-cleavage at a specific serine bond to produce a beta-subunit with a hydroxyl group at its C-terminus and an alpha-subunit with a pyruvoyl group at its N-terminus.

Its subcellular location is the cytoplasm. It catalyses the reaction L-aspartate + H(+) = beta-alanine + CO2. It functions in the pathway cofactor biosynthesis; (R)-pantothenate biosynthesis; beta-alanine from L-aspartate: step 1/1. Catalyzes the pyruvoyl-dependent decarboxylation of aspartate to produce beta-alanine. The sequence is that of Aspartate 1-decarboxylase from Salmonella choleraesuis (strain SC-B67).